A 377-amino-acid chain; its full sequence is Histone deacetylase 8 (377 aa).

The segment at 14-324 (LPPVYIYSPE…WTYLTGVILG (311 aa)) is histone deacetylase. At Ser39 the chain carries Phosphoserine. Asp101 serves as a coordination point for substrate. The active-site Proton acceptor is His143. Gly151 contacts substrate. Residues Asp178, His180, and Asp267 each coordinate a divalent metal cation. Residue Tyr306 coordinates substrate.

This sequence belongs to the histone deacetylase family. HD type 1 subfamily. Interacts with CBFA2T3. Interacts with phosphorylated SMG5/EST1B; this interaction protects SMG5 from ubiquitin-mediated degradation. Associates with alpha-SMA (smooth muscle alpha-actin). A divalent metal cation is required as a cofactor. In terms of processing, phosphorylated by PKA on serine 39. Phosphorylation reduces deacetylase activity observed preferentially on histones H3 and H4.

It localises to the nucleus. Its subcellular location is the chromosome. It is found in the cytoplasm. It catalyses the reaction N(6)-acetyl-L-lysyl-[histone] + H2O = L-lysyl-[histone] + acetate. It carries out the reaction N(6)-acetyl-L-lysyl-[protein] + H2O = L-lysyl-[protein] + acetate. The catalysed reaction is N(6)-(2E)-butenoyl-L-lysyl-[protein] + H2O = (2E)-2-butenoate + L-lysyl-[protein]. With respect to regulation, its activity is inhibited by trichostatin A (TSA) and butyrate, 2 well known histone deacetylase inhibitors. In terms of biological role, histone deacetylase that catalyzes the deacetylation of lysine residues on the N-terminal part of the core histones (H2A, H2B, H3 and H4). Histone deacetylation gives a tag for epigenetic repression and plays an important role in transcriptional regulation, cell cycle progression and developmental events. Histone deacetylases act via the formation of large multiprotein complexes. Also involved in the deacetylation of cohesin complex protein SMC3 regulating release of cohesin complexes from chromatin. May play a role in smooth muscle cell contractility. In addition to protein deacetylase activity, also has protein-lysine deacylase activity: acts as a protein decrotonylase by mediating decrotonylation ((2E)-butenoyl) of histones. The protein is Histone deacetylase 8 (Hdac8) of Rattus norvegicus (Rat).